Reading from the N-terminus, the 574-residue chain is MRASNYLFSTLRDAPTDAVVTSHQLMIRAGMIRQVSKGLYTWLPTGLKVFRKIENIVRDEMEKAGSLEVMMPGVQPAELWQETGRWQKYGPELLRLQDRHGREYCLGPTHEEVITELARNELTSYKQLPMNFFQIQTKFRDEVRPRFGVMRSREFCMKDAYSFHVGAESLQETYDIMHKAYCNVFDRIGLNYRPVRADTGSIGGAYSHEFHVLADSGEDDIAFSDSSDFAANIELAEAICLKEKADAPTQDITEVFTPDCKTIAKVAEFLKLDVTSTVKTMLIKAVDENDQPTIAALVLRGDHNINEIKVEKLAGVVIPFEFADEADIIAKTGCAPGSIGPKGLAEKGIRVIADRSAAVMSDFCAGANKDDYHFTGLNWERDCAEFEVADIRNVVEGDPSPDGQGTIVIKRGIEVGHIFQLGQQYAEALKATVLDENGKAQVMHMGCYGIGVSRIVAAAIEQNFDEKGILWPESIAPFDIAIVAMNYDKSEAVRTECDRLYAELKAKGLDVLLDDRKERPGVKFADCELLGIPHRLVVGDKGLEKGTLEYKYRKAGDNEDIAIADAVEFILSKK.

The protein belongs to the class-II aminoacyl-tRNA synthetase family. ProS type 1 subfamily. In terms of assembly, homodimer.

It is found in the cytoplasm. It catalyses the reaction tRNA(Pro) + L-proline + ATP = L-prolyl-tRNA(Pro) + AMP + diphosphate. In terms of biological role, catalyzes the attachment of proline to tRNA(Pro) in a two-step reaction: proline is first activated by ATP to form Pro-AMP and then transferred to the acceptor end of tRNA(Pro). As ProRS can inadvertently accommodate and process non-cognate amino acids such as alanine and cysteine, to avoid such errors it has two additional distinct editing activities against alanine. One activity is designated as 'pretransfer' editing and involves the tRNA(Pro)-independent hydrolysis of activated Ala-AMP. The other activity is designated 'posttransfer' editing and involves deacylation of mischarged Ala-tRNA(Pro). The misacylated Cys-tRNA(Pro) is not edited by ProRS. The polypeptide is Proline--tRNA ligase (Marinomonas sp. (strain MWYL1)).